The following is a 262-amino-acid chain: Acyl-[acyl-carrier-protein]--UDP-N-acetylglucosamine O-acyltransferase (262 aa).

The protein belongs to the transferase hexapeptide repeat family. LpxA subfamily. In terms of assembly, homotrimer.

It localises to the cytoplasm. It carries out the reaction a (3R)-hydroxyacyl-[ACP] + UDP-N-acetyl-alpha-D-glucosamine = a UDP-3-O-[(3R)-3-hydroxyacyl]-N-acetyl-alpha-D-glucosamine + holo-[ACP]. Its pathway is glycolipid biosynthesis; lipid IV(A) biosynthesis; lipid IV(A) from (3R)-3-hydroxytetradecanoyl-[acyl-carrier-protein] and UDP-N-acetyl-alpha-D-glucosamine: step 1/6. In terms of biological role, involved in the biosynthesis of lipid A, a phosphorylated glycolipid that anchors the lipopolysaccharide to the outer membrane of the cell. This is Acyl-[acyl-carrier-protein]--UDP-N-acetylglucosamine O-acyltransferase from Erwinia tasmaniensis (strain DSM 17950 / CFBP 7177 / CIP 109463 / NCPPB 4357 / Et1/99).